A 523-amino-acid chain; its full sequence is Succinate-semialdehyde dehydrogenase, mitochondrial (523 aa).

The transit peptide at 1 to 35 (MATCFLLRSFWAARPALPPPGRFRPEPAGTPRRSY) directs the protein to the mitochondrion. K74 bears the N6-acetyllysine mark. Residue K114 is modified to N6-acetyllysine; alternate. An N6-succinyllysine; alternate modification is found at K114. At K123 the chain carries N6-succinyllysine. At K128 the chain carries N6-acetyllysine. K172 bears the N6-succinyllysine mark. NAD(+)-binding positions include R201 and 216-219 (KPAE). A substrate-binding site is contributed by R201. Position 253 is an N6-acetyllysine; alternate (K253). K253 is modified (N6-succinyllysine; alternate). 272–277 (GSTATG) is an NAD(+) binding site. The active-site Proton acceptor is E294. R322 contributes to the substrate binding site. Residue C328 is the Nucleophile of the active site. A disulfide bridge connects residues C328 and C330. K347 is subject to N6-acetyllysine; alternate. An N6-succinyllysine; alternate modification is found at K347. K353 carries the N6-acetyllysine modification. An N6-succinyllysine modification is found at K390. K399 is subject to N6-acetyllysine. S403 carries the phosphoserine modification. S486 serves as a coordination point for substrate. S487 bears the Phosphoserine mark.

The protein belongs to the aldehyde dehydrogenase family. In terms of assembly, homotetramer.

The protein resides in the mitochondrion. The catalysed reaction is succinate semialdehyde + NAD(+) + H2O = succinate + NADH + 2 H(+). Its pathway is amino-acid degradation; 4-aminobutanoate degradation. With respect to regulation, redox-regulated. Inhibited under oxydizing conditions. Catalyzes one step in the degradation of the inhibitory neurotransmitter gamma-aminobutyric acid (GABA). The polypeptide is Succinate-semialdehyde dehydrogenase, mitochondrial (Aldh5a1) (Mus musculus (Mouse)).